The sequence spans 295 residues: Bifunctional protein FolD (295 aa).

NADP(+)-binding positions include 164–166 (GRS), Ser-193, and Ile-234.

The protein belongs to the tetrahydrofolate dehydrogenase/cyclohydrolase family. In terms of assembly, homodimer.

The catalysed reaction is (6R)-5,10-methylene-5,6,7,8-tetrahydrofolate + NADP(+) = (6R)-5,10-methenyltetrahydrofolate + NADPH. The enzyme catalyses (6R)-5,10-methenyltetrahydrofolate + H2O = (6R)-10-formyltetrahydrofolate + H(+). The protein operates within one-carbon metabolism; tetrahydrofolate interconversion. In terms of biological role, catalyzes the oxidation of 5,10-methylenetetrahydrofolate to 5,10-methenyltetrahydrofolate and then the hydrolysis of 5,10-methenyltetrahydrofolate to 10-formyltetrahydrofolate. This chain is Bifunctional protein FolD, found in Flavobacterium johnsoniae (strain ATCC 17061 / DSM 2064 / JCM 8514 / BCRC 14874 / CCUG 350202 / NBRC 14942 / NCIMB 11054 / UW101) (Cytophaga johnsonae).